The chain runs to 268 residues: 18S rRNA (guanine-N(7))-methyltransferase bud23 (268 aa).

Residues 246 to 268 (RKRGRLHVPKDSKYSGRRRKAAF) are disordered.

This sequence belongs to the class I-like SAM-binding methyltransferase superfamily. BUD23/WBSCR22 family.

The protein localises to the cytoplasm. The protein resides in the nucleus. The enzyme catalyses a guanosine in 18S rRNA + S-adenosyl-L-methionine = an N(7)-methylguanosine in 18S rRNA + S-adenosyl-L-homocysteine. Its function is as follows. S-adenosyl-L-methionine-dependent methyltransferase that specifically methylates the N(7) position of a guanine in 18S rRNA. Important for biogenesis end export of the 40S ribosomal subunit independent on its methyltransferase activity. The protein is 18S rRNA (guanine-N(7))-methyltransferase bud23 (bud23) of Schizosaccharomyces pombe (strain 972 / ATCC 24843) (Fission yeast).